The following is a 179-amino-acid chain: Large ribosomal subunit protein uL5 (179 aa).

The protein belongs to the universal ribosomal protein uL5 family. In terms of assembly, part of the 50S ribosomal subunit; part of the 5S rRNA/L5/L18/L25 subcomplex. Contacts the 5S rRNA and the P site tRNA. Forms a bridge to the 30S subunit in the 70S ribosome.

This is one of the proteins that bind and probably mediate the attachment of the 5S RNA into the large ribosomal subunit, where it forms part of the central protuberance. In the 70S ribosome it contacts protein S13 of the 30S subunit (bridge B1b), connecting the 2 subunits; this bridge is implicated in subunit movement. Contacts the P site tRNA; the 5S rRNA and some of its associated proteins might help stabilize positioning of ribosome-bound tRNAs. This Prochlorococcus marinus (strain AS9601) protein is Large ribosomal subunit protein uL5.